The primary structure comprises 198 residues: Large ribosomal subunit protein eL18 (198 aa).

A disordered region spans residues 157 to 198 (RHFGASGVPGSHSKPYATNRGKETKRGRRTGRSYKRKAFRHV). Positions 179–198 (ETKRGRRTGRSYKRKAFRHV) are enriched in basic residues.

The protein belongs to the eukaryotic ribosomal protein eL18 family.

The protein resides in the cytoplasm. This Leishmania major protein is Large ribosomal subunit protein eL18 (RPL18-A).